The primary structure comprises 497 residues: Guanosine-5'-triphosphate,3'-diphosphate pyrophosphatase (497 aa).

Belongs to the GppA/Ppx family. GppA subfamily.

The catalysed reaction is guanosine 3'-diphosphate 5'-triphosphate + H2O = guanosine 3',5'-bis(diphosphate) + phosphate + H(+). Its pathway is purine metabolism; ppGpp biosynthesis; ppGpp from GTP: step 2/2. In terms of biological role, catalyzes the conversion of pppGpp to ppGpp. Guanosine pentaphosphate (pppGpp) is a cytoplasmic signaling molecule which together with ppGpp controls the 'stringent response', an adaptive process that allows bacteria to respond to amino acid starvation, resulting in the coordinated regulation of numerous cellular activities. The chain is Guanosine-5'-triphosphate,3'-diphosphate pyrophosphatase from Aliivibrio fischeri (strain MJ11) (Vibrio fischeri).